Consider the following 353-residue polypeptide: Protein RecA (353 aa).

67–74 (GPESSGKT) is a binding site for ATP.

It belongs to the RecA family.

Its subcellular location is the cytoplasm. Its function is as follows. Can catalyze the hydrolysis of ATP in the presence of single-stranded DNA, the ATP-dependent uptake of single-stranded DNA by duplex DNA, and the ATP-dependent hybridization of homologous single-stranded DNAs. It interacts with LexA causing its activation and leading to its autocatalytic cleavage. The protein is Protein RecA of Chlamydia pneumoniae (Chlamydophila pneumoniae).